A 202-amino-acid chain; its full sequence is Histone chaperone ASF1B (202 aa).

Positions 1 to 155 (MAKVSVLNVA…VTRFHINWDN (155 aa)) are interaction with CHAF1B. The interval 1 to 156 (MAKVSVLNVA…TRFHINWDNN (156 aa)) is interaction with histone H3. At Ser198 the chain carries Phosphoserine; by TLK2.

The protein belongs to the ASF1 family. Interacts with histone H3 (via C-terminus), including histone H3.1, H3.2 and H3.3, and histone H4; the interaction with H3 is direct. Interacts with the CHAF1A, CHAF1B and RBBP4 subunits of the CAF-1 complex. Interacts with HAT1, NASP and TAF1. Found in a soluble complex with NASP and histones H3 and H4; the interaction with NASP is probably indirect and mediated by H3-H4. Interacts with CDAN1. Found in a cytosolic complex with IPO4 and histones H3 and H4. Interacts with CREBBP. In terms of processing, phosphorylated by TLK1 and TLK2. As to expression, highly expressed in testis and at lower levels in colon, small intestine and thymus.

It localises to the nucleus. It is found in the cytoplasm. Its subcellular location is the cytosol. In terms of biological role, histone chaperone that facilitates histone deposition and histone exchange and removal during nucleosome assembly and disassembly. Cooperates with chromatin assembly factor 1 (CAF-1) to promote replication-dependent chromatin assembly. Also involved in the nuclear import of the histone H3-H4 dimer together with importin-4 (IPO4): specifically recognizes and binds newly synthesized histones with the monomethylation of H3 'Lys-9' (H3K9me1) and diacetylation at 'Lys-5' and 'Lys-12' of H4 (H4K5K12ac) marks in the cytosol. Does not participate in replication-independent nucleosome deposition which is mediated by ASF1A and HIRA. Required for gonad development. The chain is Histone chaperone ASF1B from Homo sapiens (Human).